The sequence spans 158 residues: MPLLLTGKKFHNDLKTNKCLAIFAPLEGGYETRLLRRMRAKGFKTFITSARGLGDPEVFLLKLHGVRPPHLGHQSVGRNGALGEVQQVIPQASELFNENDKNKLLWLLEGQVLSQSELESLIEICTNDNKLTIVVEMGGSRKLEWKPLSNYILDEFES.

The protein belongs to the complex I NdhN subunit family. NDH-1 can be composed of about 15 different subunits; different subcomplexes with different compositions have been identified which probably have different functions.

The protein resides in the cellular thylakoid membrane. The enzyme catalyses a plastoquinone + NADH + (n+1) H(+)(in) = a plastoquinol + NAD(+) + n H(+)(out). The catalysed reaction is a plastoquinone + NADPH + (n+1) H(+)(in) = a plastoquinol + NADP(+) + n H(+)(out). Its function is as follows. NDH-1 shuttles electrons from an unknown electron donor, via FMN and iron-sulfur (Fe-S) centers, to quinones in the respiratory and/or the photosynthetic chain. The immediate electron acceptor for the enzyme in this species is believed to be plastoquinone. Couples the redox reaction to proton translocation, and thus conserves the redox energy in a proton gradient. Cyanobacterial NDH-1 also plays a role in inorganic carbon-concentration. This Prochlorococcus marinus (strain MIT 9215) protein is NAD(P)H-quinone oxidoreductase subunit N.